Reading from the N-terminus, the 385-residue chain is MSLGLLESQLRLKVFGRLQVIRQHLRMTNHTVKDGECLLTKAGCAGVITLNRPKALNALNLGMIRLIYPQLGLWEEDPETYLVIIKGVGGKAFCAGGDIRAVTDAGKAGDRLAQDFFREEYILNNAIGTYKKPYVALIDGITMGGGVGLSVHGHFRVASENTLFAMPETAIGLFPDVGGGYFLPRLPGKLGLYLALTGFRLKGSDVQKAGIATHFVESEKIPSLEQDLVAMKCPSKENVADVLDSYHNKSYAAQDKPFVLAEHLDKINSLFSASSVEAIIENLRCDGSSFALKQLQTLSTMSPTSLKITFRQLKEGSSMSLQEVLTMEYRLSQACMKGYDFYEGVRAVLIDKNQNAKWNPELLEEVTDDYIDSYFTSLGNSDLKL.

The substrate site is built by glutamate 120, glycine 145, glutamate 168, and aspartate 176.

Belongs to the enoyl-CoA hydratase/isomerase family.

It is found in the mitochondrion. It catalyses the reaction 3-hydroxy-2-methylpropanoyl-CoA + H2O = 3-hydroxy-2-methylpropanoate + CoA + H(+). The protein operates within amino-acid degradation; L-valine degradation. Hydrolyzes 3-hydroxyisobutyryl-CoA (HIBYL-CoA), a saline catabolite. Has high activity toward isobutyryl-CoA. Could be an isobutyryl-CoA dehydrogenase that functions in valine catabolism. Also hydrolyzes 3-hydroxypropanoyl-CoA. The chain is 3-hydroxyisobutyryl-CoA hydrolase, mitochondrial (hibch) from Xenopus tropicalis (Western clawed frog).